A 187-amino-acid polypeptide reads, in one-letter code: MVEYWKRNFFMVLVLQAFYLANCLTDEEIPEEWLLLHVLQGQIGAGNYSYLRLNHEGTIILQVQSLKGDADIYVSSLTLNPTFDDYELQSTTCGLDKITIAHHLSRPVGIGIYGHPSHMESEFELKVYYDRTVREDPFADASYDPEVLEAKQRQQQQQTSLDSSQEEESVLRTILIGVLKIVLELLF.

An N-terminal signal peptide occupies residues 1–23 (MVEYWKRNFFMVLVLQAFYLANC). The N-linked (GlcNAc...) asparagine glycan is linked to Asn47.

This sequence belongs to the UPF0669 family.

It localises to the secreted. The protein is UPF0669 protein C6orf120 homolog of Xenopus tropicalis (Western clawed frog).